Reading from the N-terminus, the 215-residue chain is Na(+)-translocating NADH-quinone reductase subunit D (215 aa).

6 consecutive transmembrane segments (helical) span residues 14-34 (PFIS…ALAV), 42-62 (FVMA…ISLI), 72-92 (IIVQ…LLKA), 103-123 (VFVG…AYAM), 131-151 (FLDG…VGTI), and 178-198 (NGML…IWVL).

It belongs to the NqrDE/RnfAE family. As to quaternary structure, composed of six subunits; NqrA, NqrB, NqrC, NqrD, NqrE and NqrF.

The protein resides in the cell inner membrane. It catalyses the reaction a ubiquinone + n Na(+)(in) + NADH + H(+) = a ubiquinol + n Na(+)(out) + NAD(+). Its function is as follows. NQR complex catalyzes the reduction of ubiquinone-1 to ubiquinol by two successive reactions, coupled with the transport of Na(+) ions from the cytoplasm to the periplasm. NqrA to NqrE are probably involved in the second step, the conversion of ubisemiquinone to ubiquinol. The protein is Na(+)-translocating NADH-quinone reductase subunit D of Tolumonas auensis (strain DSM 9187 / NBRC 110442 / TA 4).